We begin with the raw amino-acid sequence, 131 residues long: uncharacterized protein (131 aa).

The N-terminal stretch at 1 to 26 (MKKIVAAIVVIGLVFIAFFYLYSRSG) is a signal peptide.

This is an uncharacterized protein from Bacillus subtilis (strain 168).